A 351-amino-acid polypeptide reads, in one-letter code: Ribosomal RNA large subunit methyltransferase M (351 aa).

S-adenosyl-L-methionine contacts are provided by residues Ser186, Ala219 to Gly222, Asp238, Asp258, and Asp274. The active-site Proton acceptor is the Lys303.

Belongs to the class I-like SAM-binding methyltransferase superfamily. RNA methyltransferase RlmE family. RlmM subfamily. In terms of assembly, monomer.

The protein localises to the cytoplasm. The enzyme catalyses cytidine(2498) in 23S rRNA + S-adenosyl-L-methionine = 2'-O-methylcytidine(2498) in 23S rRNA + S-adenosyl-L-homocysteine + H(+). Catalyzes the 2'-O-methylation at nucleotide C2498 in 23S rRNA. This chain is Ribosomal RNA large subunit methyltransferase M, found in Xylella fastidiosa (strain 9a5c).